The primary structure comprises 179 residues: Large ribosomal subunit protein uL5 (179 aa).

The protein belongs to the universal ribosomal protein uL5 family. Part of the 50S ribosomal subunit; part of the 5S rRNA/L5/L18/L25 subcomplex. Contacts the 5S rRNA and the P site tRNA. Forms a bridge to the 30S subunit in the 70S ribosome.

Its function is as follows. This is one of the proteins that bind and probably mediate the attachment of the 5S RNA into the large ribosomal subunit, where it forms part of the central protuberance. In the 70S ribosome it contacts protein S13 of the 30S subunit (bridge B1b), connecting the 2 subunits; this bridge is implicated in subunit movement. Contacts the P site tRNA; the 5S rRNA and some of its associated proteins might help stabilize positioning of ribosome-bound tRNAs. The polypeptide is Large ribosomal subunit protein uL5 (Burkholderia ambifaria (strain MC40-6)).